A 241-amino-acid polypeptide reads, in one-letter code: Aspartate/glutamate leucyltransferase (241 aa).

It belongs to the R-transferase family. Bpt subfamily.

It localises to the cytoplasm. The catalysed reaction is N-terminal L-glutamyl-[protein] + L-leucyl-tRNA(Leu) = N-terminal L-leucyl-L-glutamyl-[protein] + tRNA(Leu) + H(+). The enzyme catalyses N-terminal L-aspartyl-[protein] + L-leucyl-tRNA(Leu) = N-terminal L-leucyl-L-aspartyl-[protein] + tRNA(Leu) + H(+). Functions in the N-end rule pathway of protein degradation where it conjugates Leu from its aminoacyl-tRNA to the N-termini of proteins containing an N-terminal aspartate or glutamate. The chain is Aspartate/glutamate leucyltransferase from Parvibaculum lavamentivorans (strain DS-1 / DSM 13023 / NCIMB 13966).